A 201-amino-acid chain; its full sequence is UPF0301 protein ROP_34500 (201 aa).

Belongs to the UPF0301 (AlgH) family.

The protein is UPF0301 protein ROP_34500 of Rhodococcus opacus (strain B4).